Reading from the N-terminus, the 727-residue chain is Glucans biosynthesis glucosyltransferase H (727 aa).

Residues 18-38 (SAMPNERPGAMEPQNLSKMPE) form a disordered region. Helical transmembrane passes span 58–78 (FLVV…MGAV), 97–117 (VNFC…LILL), 278–298 (LQQF…GWWV), 408–428 (IMAY…LMLA), 460–480 (LFYI…LLLL), 496–516 (IFSV…MMFI), and 572–592 (LLAW…ISAW).

It belongs to the glycosyltransferase 2 family. OpgH subfamily.

It localises to the cell inner membrane. It functions in the pathway glycan metabolism; osmoregulated periplasmic glucan (OPG) biosynthesis. Functionally, involved in the biosynthesis of osmoregulated periplasmic glucans (OPGs). The protein is Glucans biosynthesis glucosyltransferase H of Shewanella baltica (strain OS223).